The sequence spans 106 residues: Nucleoid-associated protein RPD_0086 (106 aa).

It belongs to the YbaB/EbfC family. In terms of assembly, homodimer.

It is found in the cytoplasm. The protein resides in the nucleoid. In terms of biological role, binds to DNA and alters its conformation. May be involved in regulation of gene expression, nucleoid organization and DNA protection. This is Nucleoid-associated protein RPD_0086 from Rhodopseudomonas palustris (strain BisB5).